Here is a 374-residue protein sequence, read N- to C-terminus: Speckle-type POZ protein (374 aa).

One can recognise an MATH domain in the interval 31–161; it reads KFSYMWTINN…DDKLTLFCEV (131 aa). Residues 71–191 are required for nuclear localization; the sequence is VNPKGLDEES…PECRLADELG (121 aa). The important for binding substrate proteins stretch occupies residues 123–133; the sequence is YRFVQGKDWGF. Residues 173–297 form the BTB domain; the sequence is QNTMNMVKVP…MCEDALCSNL (125 aa). Important for homodimerization regions lie at residues 186-217 and 297-355; these read LADELGGLWENSRFTDCCLCVAGQEFQAHKAI and LSVE…AYRS.

This sequence belongs to the Tdpoz family. As to quaternary structure, interacts with GLI2 and GLI3. Homodimer and homooligomer. Heterodimer with SPOPL. Each dimer interacts with two CUL3 molecules. Part of cullin-RING-based BCR (BTB-CUL3-RBX1) E3 ubiquitin-protein ligase complexes that contain CUL3 and homodimeric SPOP, or the heterodimer formed by SPOP and SPOPL, plus a target protein, such as MACROH2A1, PDX1/IPF1, BMI1, BRMS1 and DAXX. Interacts with IRF1; this interaction mediates IRF1 proteasomal degradation. Interacts with HNF1A.

It localises to the nucleus. The protein resides in the nucleus speckle. It functions in the pathway protein modification; protein ubiquitination. Its function is as follows. Component of a cullin-RING-based BCR (BTB-CUL3-RBX1) E3 ubiquitin-protein ligase complex that mediates the ubiquitination of target proteins, leading most often to their proteasomal degradation. In complex with CUL3, involved in ubiquitination and proteasomal degradation of BRMS1, DAXX, PDX1/IPF1, GLI2 and GLI3. In complex with CUL3, involved in ubiquitination of MACROH2A1 and BMI1; this does not lead to their proteasomal degradation. Inhibits transcriptional activation of PDX1/IPF1 targets, such as insulin, by promoting PDX1/IPF1 degradation. The cullin-RING-based BCR (BTB-CUL3-RBX1) E3 ubiquitin-protein ligase complex containing homodimeric SPOP has higher ubiquitin ligase activity than the complex that contains the heterodimer formed by SPOP and SPOPL. Involved in the regulation of bromodomain and extra-terminal motif (BET) proteins BRD2, BRD3, BRD4 stability.Plays an essential role for proper translation, but not for their degradation, of critical DNA replication licensing factors CDT1 and CDC6, thereby participating in DNA synthesis and cell proliferation. Regulates interferon regulatory factor 1/IRF1 proteasomal turnover by targeting S/T-rich degrons in IRF1. Involved in ubiquitination of BRDT and promotes its degradation, thereby regulates histone removal in early condensing spermatids prior to histone-to-protamine exchange. The polypeptide is Speckle-type POZ protein (SPOP) (Bos taurus (Bovine)).